The primary structure comprises 468 residues: ATP synthase subunit beta 2 (468 aa).

Position 155 to 162 (155 to 162 (GGAGVGKT)) interacts with ATP.

The protein belongs to the ATPase alpha/beta chains family. As to quaternary structure, F-type ATPases have 2 components, CF(1) - the catalytic core - and CF(0) - the membrane proton channel. CF(1) has five subunits: alpha(3), beta(3), gamma(1), delta(1), epsilon(1). CF(0) has four main subunits: a(1), b(1), b'(1) and c(9-12).

Its subcellular location is the cell inner membrane. It carries out the reaction ATP + H2O + 4 H(+)(in) = ADP + phosphate + 5 H(+)(out). Produces ATP from ADP in the presence of a proton gradient across the membrane. The catalytic sites are hosted primarily by the beta subunits. This Chlorobium luteolum (strain DSM 273 / BCRC 81028 / 2530) (Pelodictyon luteolum) protein is ATP synthase subunit beta 2.